We begin with the raw amino-acid sequence, 367 residues long: uncharacterized protein (367 aa).

4 helical membrane-spanning segments follow: residues 35-55 (YVYD…IILW), 61-81 (LALF…TLLV), 92-112 (EVAD…TAAG), and 113-133 (LMFS…PLFL). Disordered stretches follow at residues 177–220 (KLPK…PASI), 249–283 (SNIK…YYTP), and 296–367 (GDIS…SRPK). Positions 257 to 274 (NTKSILHTPLNRRSPSGS) are enriched in polar residues. The segment covering 302-312 (SSSSTSSKTST) has biased composition (low complexity). Residues 323-342 (SRSERNARHHRNKEDHRQNQ) are compositionally biased toward basic and acidic residues. Basic residues predominate over residues 357–367 (PRRKKYRSRPK).

The protein belongs to the chlamydial CPn_0443/CT_005/TC_0273 family.

The protein resides in the cell membrane. This is an uncharacterized protein from Chlamydia muridarum (strain MoPn / Nigg).